We begin with the raw amino-acid sequence, 413 residues long: Succinate--CoA ligase [ADP-forming] subunit beta, mitochondrial (413 aa).

The N-terminal 2 residues, 1 to 2 (RR), are a transit peptide targeting the mitochondrion. The ATP-grasp domain maps to 11-238 (MGLLQEAGIS…SNSAYRQKKI (228 aa)). ATP is bound by residues lysine 48 and 55-57 (GRG). Asparagine 208 and aspartate 222 together coordinate Mg(2+). Residues asparagine 273 and 330–332 (GIM) each bind substrate.

The protein belongs to the succinate/malate CoA ligase beta subunit family. ATP-specific subunit beta subfamily. In terms of assembly, heterodimer of an alpha and a beta subunit. The beta subunit determines specificity for ATP. Requires Mg(2+) as cofactor. As to expression, widely expressed. Not present in liver.

The protein localises to the mitochondrion. The enzyme catalyses succinate + ATP + CoA = succinyl-CoA + ADP + phosphate. Its pathway is carbohydrate metabolism; tricarboxylic acid cycle; succinate from succinyl-CoA (ligase route): step 1/1. In terms of biological role, ATP-specific succinyl-CoA synthetase functions in the citric acid cycle (TCA), coupling the hydrolysis of succinyl-CoA to the synthesis of ATP and thus represents the only step of substrate-level phosphorylation in the TCA. The beta subunit provides nucleotide specificity of the enzyme and binds the substrate succinate, while the binding sites for coenzyme A and phosphate are found in the alpha subunit. The polypeptide is Succinate--CoA ligase [ADP-forming] subunit beta, mitochondrial (Columba livia (Rock dove)).